The chain runs to 234 residues: Leucyl/phenylalanyl-tRNA--protein transferase (234 aa).

It belongs to the L/F-transferase family.

Its subcellular location is the cytoplasm. The catalysed reaction is N-terminal L-lysyl-[protein] + L-leucyl-tRNA(Leu) = N-terminal L-leucyl-L-lysyl-[protein] + tRNA(Leu) + H(+). It carries out the reaction N-terminal L-arginyl-[protein] + L-leucyl-tRNA(Leu) = N-terminal L-leucyl-L-arginyl-[protein] + tRNA(Leu) + H(+). It catalyses the reaction L-phenylalanyl-tRNA(Phe) + an N-terminal L-alpha-aminoacyl-[protein] = an N-terminal L-phenylalanyl-L-alpha-aminoacyl-[protein] + tRNA(Phe). Its function is as follows. Functions in the N-end rule pathway of protein degradation where it conjugates Leu, Phe and, less efficiently, Met from aminoacyl-tRNAs to the N-termini of proteins containing an N-terminal arginine or lysine. In Salmonella paratyphi A (strain ATCC 9150 / SARB42), this protein is Leucyl/phenylalanyl-tRNA--protein transferase.